The sequence spans 261 residues: Chitinase 8 (261 aa).

The first 29 residues, 1–29 (MTTTTTRFVQLAACAAASLLAVAASGAAA), serve as a signal peptide directing secretion. Cystine bridges form between C53–C115 and C221–C253. The active-site Proton donor is the E98.

It belongs to the glycosyl hydrolase 19 family. Chitinase class II subfamily. As to expression, expressed in roots, leaves, sheaths and meristems.

It carries out the reaction Random endo-hydrolysis of N-acetyl-beta-D-glucosaminide (1-&gt;4)-beta-linkages in chitin and chitodextrins.. This Oryza sativa subsp. japonica (Rice) protein is Chitinase 8 (Cht8).